Here is a 304-residue protein sequence, read N- to C-terminus: N-acetylmuramic acid 6-phosphate etherase (304 aa).

The region spanning 62-225 (IVEAFQQGGR…TTASMILIGK (164 aa)) is the SIS domain. Residue glutamate 90 is the Proton donor of the active site. The active site involves glutamate 121.

Belongs to the GCKR-like family. MurNAc-6-P etherase subfamily. In terms of assembly, homodimer.

It catalyses the reaction N-acetyl-D-muramate 6-phosphate + H2O = N-acetyl-D-glucosamine 6-phosphate + (R)-lactate. It functions in the pathway amino-sugar metabolism; 1,6-anhydro-N-acetylmuramate degradation. Its pathway is amino-sugar metabolism; N-acetylmuramate degradation. It participates in cell wall biogenesis; peptidoglycan recycling. Its function is as follows. Specifically catalyzes the cleavage of the D-lactyl ether substituent of MurNAc 6-phosphate, producing GlcNAc 6-phosphate and D-lactate. Together with AnmK, is also required for the utilization of anhydro-N-acetylmuramic acid (anhMurNAc) either imported from the medium or derived from its own cell wall murein, and thus plays a role in cell wall recycling. This is N-acetylmuramic acid 6-phosphate etherase from Glaesserella parasuis serovar 5 (strain SH0165) (Haemophilus parasuis).